The chain runs to 472 residues: Inhibitor of Apoptosis OPG037 (472 aa).

6 ANK repeats span residues 97 to 126, 130 to 161, 233 to 263, 267 to 297, 322 to 351, and 353 to 377; these read DGNY…DPNA, HNKT…KINN, DGNT…DVNK, FGDS…VITD, YDST…ICED, and MYYA…SVDS.

The protein belongs to the orthopoxvirus OPG037 protein family. As to quaternary structure, may interact with host caspase-9-Apaf-1 complex.

The protein localises to the host cytoplasm. Functionally, inhibits host apoptosis. Acts by associating with host apoptosome. The chain is Inhibitor of Apoptosis OPG037 (OPG037) from Homo sapiens (Human).